The sequence spans 362 residues: Ferrochelatase (362 aa).

The Fe cation site is built by His-228 and Glu-309.

Belongs to the ferrochelatase family.

Its subcellular location is the cytoplasm. The enzyme catalyses heme b + 2 H(+) = protoporphyrin IX + Fe(2+). Its pathway is porphyrin-containing compound metabolism; protoheme biosynthesis; protoheme from protoporphyrin-IX: step 1/1. In terms of biological role, catalyzes the ferrous insertion into protoporphyrin IX. This Bordetella pertussis (strain Tohama I / ATCC BAA-589 / NCTC 13251) protein is Ferrochelatase.